A 347-amino-acid polypeptide reads, in one-letter code: Metacaspase-2 (347 aa).

Residues 1 to 55 (MCSLITQLCDAGQLADYVGLGWLNAVSSQPYLVQALGLQPPPRRVDVDAAFRDAK) constitute a propeptide that is removed on maturation. Residues 1 to 70 (MCSLITQLCD…QPWVATPLPG (70 aa)) form a regulates substrate access to the active site region. The active site involves His158. Residues Asp173, Asp189, and Asp190 each coordinate Ca(2+). Cys213 is a catalytic residue. Asp220 serves as a coordination point for Ca(2+).

It belongs to the peptidase C14B family. Monomer. Auto-proteolytic cleavage of the propeptide after Lys-55 and between the large and small subunits after Lys-268 is required for catalytic activity towards large protein substrates but is dispensable towards small oligopeptide substrates. After processing, the propeptide and the large and small subunits remain associated by non-covalent bonds. In vivo, the unprocessed enzyme appears to be the predominant form.

Its subcellular location is the recycling endosome. Its activity is regulated as follows. Activated by Ca(2+). In response to calcium binding, the 280-loop, a disordered loop consisting of residues 269-275, undergoes a conformational change which stabilizes substrates in the active site. The binding to the substrate triggers the release of the N-terminal region resulting in the activation of the enzyme. Proteolytic cleavage is required for catalytic activity towards large protein substrates. Functionally, cysteine protease that cleaves specifically after arginine or lysine residues. This Trypanosoma brucei brucei (strain 927/4 GUTat10.1) protein is Metacaspase-2.